The following is a 142-amino-acid chain: HTH-type transcriptional regulator MntR (142 aa).

An HTH dtxR-type domain is found at 1-63 (MPTPSMEDYI…YEKYRGLVLT (63 aa)). 6 residues coordinate Mn(2+): Asp-8, Glu-11, His-77, Glu-99, Glu-102, and His-103.

This sequence belongs to the DtxR/MntR family. In terms of assembly, homodimer.

It is found in the cytoplasm. With respect to regulation, DNA binding is strongly activated by Mn(2+). Central regulator of manganese homeostasis. This chain is HTH-type transcriptional regulator MntR, found in Bacillus mycoides (strain KBAB4) (Bacillus weihenstephanensis).